The primary structure comprises 187 residues: U8 snoRNA-decapping enzyme (187 aa).

One can recognise a Nudix hydrolase domain in the interval 43–187; it reads NSSQASHCMI…GFPTFLTTPS (145 aa). Phe82 is a substrate binding site. Residues Gly84, Glu100, Glu104, and Glu160 each coordinate Mn(2+). A Nudix box motif is present at residues 85–106; sequence GLVDAGEDSIKALNRELTEEMN.

Belongs to the Nudix hydrolase family. NUDT16 subfamily. Homodimer. Mg(2+) serves as cofactor. It depends on Mn(2+) as a cofactor. Co(2+) is required as a cofactor.

The protein resides in the nucleus. Its subcellular location is the nucleolus. It localises to the nucleoplasm. It is found in the cytoplasm. The catalysed reaction is a 5'-end (N(7)-methyl 5'-triphosphoguanosine)-ribonucleoside in mRNA + H2O = N(7)-methyl-GDP + a 5'-end phospho-ribonucleoside in mRNA + 2 H(+). It catalyses the reaction IDP + H2O = IMP + phosphate + H(+). The enzyme catalyses dIDP + H2O = dIMP + phosphate + H(+). Its function is as follows. RNA-binding and decapping enzyme that catalyzes the cleavage of the cap structure of snoRNAs in a metal-dependent manner. Has diphosphatase activity and removes m7G caps from U8 snoRNA. May catalyze the cleavage of the cap structure on mRNAs. May also act as a phosphatase; hydrolyzes the non-canonical purine nucleotides inosine diphosphate (IDP) and deoxyinosine diphosphate (dITP). May bind to the U8 snoRNA. This chain is U8 snoRNA-decapping enzyme (NUDT16), found in Homalodisca vitripennis (Glassy-winged sharpshooter).